Consider the following 187-residue polypeptide: Accessory gene regulator protein B (187 aa).

5 helical membrane-spanning segments follow: residues 49-69 (ISIF…YMLI), 82-102 (ILCY…LINI), 106-126 (FTYL…YAPA), 144-164 (LSII…PFYA), and 166-186 (FMLL…FPKE).

Belongs to the AgrB family.

The protein localises to the cell membrane. In terms of biological role, essential for the production of a quorum sensing system signal molecule, the autoinducing peptide (AIP). This quorum sensing system is responsible for the regulation of the expression of virulence factor genes. Involved in the proteolytic processing of AgrD, the precursor of AIP. This chain is Accessory gene regulator protein B, found in Staphylococcus aureus (strain Mu50 / ATCC 700699).